The following is a 340-amino-acid chain: Protein pelota homolog (340 aa).

The protein belongs to the eukaryotic release factor 1 family. Pelota subfamily. As to quaternary structure, monomer. A divalent metal cation serves as cofactor.

Its subcellular location is the cytoplasm. Its function is as follows. May function in recognizing stalled ribosomes, interact with stem-loop structures in stalled mRNA molecules, and effect endonucleolytic cleavage of the mRNA. May play a role in the release non-functional ribosomes and degradation of damaged mRNAs. Has endoribonuclease activity. This is Protein pelota homolog from Methanosphaerula palustris (strain ATCC BAA-1556 / DSM 19958 / E1-9c).